Here is a 284-residue protein sequence, read N- to C-terminus: AA14 family lytic polysaccharide monooxygenase B (284 aa).

The first 20 residues, 1-20 (MGYLSKLVTSVVFAIPLASA), serve as a signal peptide directing secretion. N-linked (GlcNAc...) asparagine glycosylation is found at N42, N96, N142, and N183. The cysteines at positions 197 and 218 are disulfide-linked.

It belongs to the polysaccharide monooxygenase AA14 family. The cofactor is Cu(2+).

The protein localises to the secreted. In terms of biological role, lytic polysaccharide monooxygenase (LPMO) that plays decomposes some specific network structures formed between cellulose and hemicellulose in the plant cell walls. Catalysis by LPMOs requires the reduction of the active-site copper from Cu(II) to Cu(I) by a reducing agent and H(2)O(2) or O(2) as a cosubstrate. This Talaromyces rugulosus (Penicillium rugulosum) protein is AA14 family lytic polysaccharide monooxygenase B.